A 290-amino-acid chain; its full sequence is MRIADYSVTKAVLERHGFTFKKSFGQNFLTDTNILQKIVNTAEINKNVNVIEIGPGIGALTEFLAENASEVMAFEIDERLVPILEDTLRDHDNVKVINEDVLKADLQTRVKEFENPDLPIKVVANLPYYITTPILMHLIESKIPFSEFVVMMQKEVADRISAEPNTKAYGSLSIAVQYYMTTKVAFAVPRTVFVPAPNVDSAILKMTRRKQPLVEVKDEDFFFRVSKASFLHRRKTLWNNLTSHFGKSEEVKNKLDQALENAAIKPSIRGEALSISDFARLSDALREAGL.

S-adenosyl-L-methionine contacts are provided by Asn-27, Leu-29, Gly-54, Glu-75, Asp-100, and Asn-125.

The protein belongs to the class I-like SAM-binding methyltransferase superfamily. rRNA adenine N(6)-methyltransferase family. RsmA subfamily.

It is found in the cytoplasm. The catalysed reaction is adenosine(1518)/adenosine(1519) in 16S rRNA + 4 S-adenosyl-L-methionine = N(6)-dimethyladenosine(1518)/N(6)-dimethyladenosine(1519) in 16S rRNA + 4 S-adenosyl-L-homocysteine + 4 H(+). Functionally, specifically dimethylates two adjacent adenosines (A1518 and A1519) in the loop of a conserved hairpin near the 3'-end of 16S rRNA in the 30S particle. May play a critical role in biogenesis of 30S subunits. The protein is Ribosomal RNA small subunit methyltransferase A of Streptococcus thermophilus (strain ATCC BAA-491 / LMD-9).